A 209-amino-acid chain; its full sequence is Large ribosomal subunit protein uL3 (209 aa).

At Gln-150 the chain carries N5-methylglutamine.

The protein belongs to the universal ribosomal protein uL3 family. As to quaternary structure, part of the 50S ribosomal subunit. Forms a cluster with proteins L14 and L19. Methylated by PrmB.

Its function is as follows. One of the primary rRNA binding proteins, it binds directly near the 3'-end of the 23S rRNA, where it nucleates assembly of the 50S subunit. The protein is Large ribosomal subunit protein uL3 of Photobacterium profundum (strain SS9).